The chain runs to 852 residues: DNA mismatch repair protein MutS (852 aa).

615-622 is an ATP binding site; sequence GPNMAGKS.

It belongs to the DNA mismatch repair MutS family.

In terms of biological role, this protein is involved in the repair of mismatches in DNA. It is possible that it carries out the mismatch recognition step. This protein has a weak ATPase activity. In Thermodesulfovibrio yellowstonii (strain ATCC 51303 / DSM 11347 / YP87), this protein is DNA mismatch repair protein MutS.